A 428-amino-acid polypeptide reads, in one-letter code: Chaperone SurA (428 aa).

The signal sequence occupies residues 1-20 (MKNWKTLLLGIAMIANTSFA). 2 consecutive PpiC domains span residues 171–272 (STEL…KVND) and 282–382 (VTEV…ELLD).

The protein resides in the periplasm. It catalyses the reaction [protein]-peptidylproline (omega=180) = [protein]-peptidylproline (omega=0). Functionally, chaperone involved in the correct folding and assembly of outer membrane proteins. Recognizes specific patterns of aromatic residues and the orientation of their side chains, which are found more frequently in integral outer membrane proteins. May act in both early periplasmic and late outer membrane-associated steps of protein maturation. This Salmonella paratyphi A (strain ATCC 9150 / SARB42) protein is Chaperone SurA.